The following is a 54-amino-acid chain: Toxin AnmTx Cj 1c-1 (54 aa).

A signal peptide spans 1 to 7 (MLNKRGV). Cystine bridges form between cysteine 9-cysteine 50, cysteine 11-cysteine 41, and cysteine 33-cysteine 51. Position 53 is a glutamic acid 1-amide (glutamate 53).

Belongs to the sea anemone sodium channel inhibitory toxin family. Type I subfamily. Contains 3 disulfide bonds.

It is found in the secreted. The protein resides in the nematocyst. In vivo, induces marked paralysis on shrimps (C.multidentata) at 10-20 seconds after injection and a weak toxicity when injected into insect larvae (M.domestica). This chain is Toxin AnmTx Cj 1c-1, found in Epiactis japonica (Sea anemone).